We begin with the raw amino-acid sequence, 132 residues long: Cytochrome c-554 (132 aa).

Residues 1–24 (MKSISMLTLAASVAFAVTAGQAVA) form the signal peptide. The region spanning 26-126 (GDPAAGEKVF…NVWAYLSQFG (101 aa)) is the Cytochrome c domain. 4 residues coordinate heme c: cysteine 38, cysteine 41, histidine 42, and methionine 104.

Post-translationally, binds 1 heme c group covalently per subunit.

The protein localises to the periplasm. This Methylosinus trichosporium protein is Cytochrome c-554.